A 393-amino-acid polypeptide reads, in one-letter code: NAD(P)H-quinone oxidoreductase subunit H, chloroplastic (393 aa).

This sequence belongs to the complex I 49 kDa subunit family. As to quaternary structure, NDH is composed of at least 16 different subunits, 5 of which are encoded in the nucleus.

Its subcellular location is the plastid. The protein localises to the chloroplast thylakoid membrane. It carries out the reaction a plastoquinone + NADH + (n+1) H(+)(in) = a plastoquinol + NAD(+) + n H(+)(out). It catalyses the reaction a plastoquinone + NADPH + (n+1) H(+)(in) = a plastoquinol + NADP(+) + n H(+)(out). In terms of biological role, NDH shuttles electrons from NAD(P)H:plastoquinone, via FMN and iron-sulfur (Fe-S) centers, to quinones in the photosynthetic chain and possibly in a chloroplast respiratory chain. The immediate electron acceptor for the enzyme in this species is believed to be plastoquinone. Couples the redox reaction to proton translocation, and thus conserves the redox energy in a proton gradient. This is NAD(P)H-quinone oxidoreductase subunit H, chloroplastic from Daucus carota (Wild carrot).